A 317-amino-acid chain; its full sequence is Ribonuclease Z (317 aa).

Zn(2+)-binding residues include His-61, His-63, Asp-65, His-66, His-153, Asp-221, and His-280. The active-site Proton acceptor is the Asp-65.

This sequence belongs to the RNase Z family. As to quaternary structure, homodimer. It depends on Zn(2+) as a cofactor.

The enzyme catalyses Endonucleolytic cleavage of RNA, removing extra 3' nucleotides from tRNA precursor, generating 3' termini of tRNAs. A 3'-hydroxy group is left at the tRNA terminus and a 5'-phosphoryl group is left at the trailer molecule.. Its function is as follows. Zinc phosphodiesterase, which displays some tRNA 3'-processing endonuclease activity. Probably involved in tRNA maturation, by removing a 3'-trailer from precursor tRNA. The chain is Ribonuclease Z from Alkaliphilus oremlandii (strain OhILAs) (Clostridium oremlandii (strain OhILAs)).